Reading from the N-terminus, the 1357-residue chain is DNA-directed RNA polymerase subunit beta (1357 aa).

The protein belongs to the RNA polymerase beta chain family. In terms of assembly, the RNAP catalytic core consists of 2 alpha, 1 beta, 1 beta' and 1 omega subunit. When a sigma factor is associated with the core the holoenzyme is formed, which can initiate transcription.

It catalyses the reaction RNA(n) + a ribonucleoside 5'-triphosphate = RNA(n+1) + diphosphate. Its function is as follows. DNA-dependent RNA polymerase catalyzes the transcription of DNA into RNA using the four ribonucleoside triphosphates as substrates. The protein is DNA-directed RNA polymerase subunit beta of Pseudomonas putida (strain ATCC 700007 / DSM 6899 / JCM 31910 / BCRC 17059 / LMG 24140 / F1).